A 233-amino-acid chain; its full sequence is Mediator of RNA polymerase II transcription subunit 7 (233 aa).

Residue K185 forms a Glycyl lysine isopeptide (Lys-Gly) (interchain with G-Cter in SUMO1); alternate linkage. Residue K185 forms a Glycyl lysine isopeptide (Lys-Gly) (interchain with G-Cter in SUMO2); alternate linkage. The segment at 187 to 213 (EPMDADDSNNCTGQNEHQRENSGHRRD) is disordered. At S194 the chain carries Phosphoserine. The segment covering 202 to 213 (EHQRENSGHRRD) has biased composition (basic and acidic residues).

The protein belongs to the Mediator complex subunit 7 family. As to quaternary structure, component of the Mediator complex, which is composed of MED1, MED4, MED6, MED7, MED8, MED9, MED10, MED11, MED12, MED13, MED13L, MED14, MED15, MED16, MED17, MED18, MED19, MED20, MED21, MED22, MED23, MED24, MED25, MED26, MED27, MED29, MED30, MED31, CCNC, CDK8 and CDC2L6/CDK11. The MED12, MED13, CCNC and CDK8 subunits form a distinct module termed the CDK8 module. Mediator containing the CDK8 module is less active than Mediator lacking this module in supporting transcriptional activation. Individual preparations of the Mediator complex lacking one or more distinct subunits have been variously termed ARC, CRSP, DRIP, PC2, SMCC and TRAP. Post-translationally, constitutively sumoylated.

Its subcellular location is the nucleus. In terms of biological role, component of the Mediator complex, a coactivator involved in the regulated transcription of nearly all RNA polymerase II-dependent genes. Mediator functions as a bridge to convey information from gene-specific regulatory proteins to the basal RNA polymerase II transcription machinery. Mediator is recruited to promoters by direct interactions with regulatory proteins and serves as a scaffold for the assembly of a functional preinitiation complex with RNA polymerase II and the general transcription factors. This Homo sapiens (Human) protein is Mediator of RNA polymerase II transcription subunit 7 (MED7).